A 469-amino-acid polypeptide reads, in one-letter code: 3-isopropylmalate dehydratase large subunit (469 aa).

[4Fe-4S] cluster contacts are provided by C350, C410, and C413.

This sequence belongs to the aconitase/IPM isomerase family. LeuC type 1 subfamily. As to quaternary structure, heterodimer of LeuC and LeuD. [4Fe-4S] cluster is required as a cofactor.

It carries out the reaction (2R,3S)-3-isopropylmalate = (2S)-2-isopropylmalate. It functions in the pathway amino-acid biosynthesis; L-leucine biosynthesis; L-leucine from 3-methyl-2-oxobutanoate: step 2/4. Functionally, catalyzes the isomerization between 2-isopropylmalate and 3-isopropylmalate, via the formation of 2-isopropylmaleate. The sequence is that of 3-isopropylmalate dehydratase large subunit from Rhizobium leguminosarum bv. trifolii (strain WSM2304).